We begin with the raw amino-acid sequence, 745 residues long: Serine/threonine-protein kinase BUR1 (745 aa).

The tract at residues methionine 1 to proline 21 is disordered. The Protein kinase domain occupies tyrosine 44–phenylalanine 349. Residues leucine 50–valine 58 and lysine 73 contribute to the ATP site. Catalysis depends on aspartate 179, which acts as the Proton acceptor. Composition is skewed to basic and acidic residues over residues aspartate 380–alanine 406, aspartate 428–asparagine 475, and lysine 493–aspartate 508. The disordered stretch occupies residues aspartate 380–aspartate 701. The span at serine 516–lysine 534 shows a compositional bias: low complexity. Residues alanine 547–glutamine 557 are compositionally biased toward basic and acidic residues. 2 stretches are compositionally biased toward polar residues: residues valine 558 to aspartate 567 and leucine 586 to asparagine 598. Over residues lysine 599–valine 631 the composition is skewed to basic and acidic residues. Residues lysine 632 to serine 660 show a composition bias toward low complexity. Positions asparagine 661–threonine 674 are enriched in polar residues. The span at glutamate 692–aspartate 701 shows a compositional bias: acidic residues.

This sequence belongs to the protein kinase superfamily. CMGC Ser/Thr protein kinase family. CDC2/CDKX subfamily.

It is found in the nucleus. It carries out the reaction L-seryl-[protein] + ATP = O-phospho-L-seryl-[protein] + ADP + H(+). The catalysed reaction is L-threonyl-[protein] + ATP = O-phospho-L-threonyl-[protein] + ADP + H(+). It catalyses the reaction [DNA-directed RNA polymerase] + ATP = phospho-[DNA-directed RNA polymerase] + ADP + H(+). Functionally, serine/threonine-protein kinase involved in transcription regulation. Phosphorylates the UBC2/RAD6 ubiquitin-conjugating enzyme (E2), leading to monoubiquitination of histone H2B and the silencing of telomeric-associated genes. Also required for histone H3 methylation. Necessary for the recovery from pheromone-induced growth arrest in the cell cycle G1 phase. Required for pseudohyphal growth and virulence in mice. The polypeptide is Serine/threonine-protein kinase BUR1 (CRK1) (Candida albicans (strain SC5314 / ATCC MYA-2876) (Yeast)).